The sequence spans 295 residues: Bifunctional protein FolD (295 aa).

NADP(+) contacts are provided by residues 165–167, Ser192, and Ile233; that span reads GRG.

This sequence belongs to the tetrahydrofolate dehydrogenase/cyclohydrolase family. In terms of assembly, homodimer.

The catalysed reaction is (6R)-5,10-methylene-5,6,7,8-tetrahydrofolate + NADP(+) = (6R)-5,10-methenyltetrahydrofolate + NADPH. The enzyme catalyses (6R)-5,10-methenyltetrahydrofolate + H2O = (6R)-10-formyltetrahydrofolate + H(+). It participates in one-carbon metabolism; tetrahydrofolate interconversion. Its function is as follows. Catalyzes the oxidation of 5,10-methylenetetrahydrofolate to 5,10-methenyltetrahydrofolate and then the hydrolysis of 5,10-methenyltetrahydrofolate to 10-formyltetrahydrofolate. This is Bifunctional protein FolD from Tropheryma whipplei (strain Twist) (Whipple's bacillus).